The following is a 205-amino-acid chain: MEVNIINVNSDRIGTIDLNPLIFSVNYRPDILKMVVDWQLSKRRAGTHKAKTIGDISGTTAKPHRQKHTGRARQGSLRSPQFRGGAVIFGPVVRSHAYSLNKKVRNLGLKVALSLKNSCNKLLILDSIDVNFVKTTQVLQFIKNFEHKSFLIIDKDYNKSVVCSCRNLHNVTLLKQIGTNVLDILRHDCIILTVGAVKYLEERLL.

A disordered region spans residues 54-78; sequence GDISGTTAKPHRQKHTGRARQGSLR. A compositionally biased stretch (basic residues) spans 62–71; the sequence is KPHRQKHTGR.

This sequence belongs to the universal ribosomal protein uL4 family. Part of the 50S ribosomal subunit.

Its function is as follows. One of the primary rRNA binding proteins, this protein initially binds near the 5'-end of the 23S rRNA. It is important during the early stages of 50S assembly. It makes multiple contacts with different domains of the 23S rRNA in the assembled 50S subunit and ribosome. Forms part of the polypeptide exit tunnel. In Ehrlichia chaffeensis (strain ATCC CRL-10679 / Arkansas), this protein is Large ribosomal subunit protein uL4.